A 278-amino-acid polypeptide reads, in one-letter code: Undecaprenyl-diphosphatase 2 (278 aa).

The next 7 membrane-spanning stretches (helical) occupy residues 1–21 (MSII…FLPI), 38–58 (FPGF…VILY), 85–105 (FMFA…GLLL), 118–138 (FIAG…RFFV), 191–211 (SFLL…GDLL), 223–243 (PLII…IWLI), and 251–271 (LIYF…YFDH).

This sequence belongs to the UppP family.

The protein localises to the cell membrane. It carries out the reaction di-trans,octa-cis-undecaprenyl diphosphate + H2O = di-trans,octa-cis-undecaprenyl phosphate + phosphate + H(+). Functionally, catalyzes the dephosphorylation of undecaprenyl diphosphate (UPP). Confers resistance to bacitracin. This chain is Undecaprenyl-diphosphatase 2, found in Halalkalibacterium halodurans (strain ATCC BAA-125 / DSM 18197 / FERM 7344 / JCM 9153 / C-125) (Bacillus halodurans).